Reading from the N-terminus, the 292-residue chain is Coiled-coil domain-containing protein 192 (292 aa).

A disordered region spans residues 28 to 55 (SVVPESDTSERSSMTSGSSESDIPQENK). Residues 38–49 (RSSMTSGSSESD) show a composition bias toward low complexity. 2 coiled-coil regions span residues 65 to 174 (QMAF…LATA) and 222 to 258 (IMELSTQVSLQTERITQLKEVLEEKERKIQQLEAERS). Residues 251 to 267 (QQLEAERSPHPPQEVKD) show a composition bias toward basic and acidic residues. Positions 251–292 (QQLEAERSPHPPQEVKDPPGCLPEAPVFSTHDIPPVVSDENL) are disordered.

The chain is Coiled-coil domain-containing protein 192 from Homo sapiens (Human).